The sequence spans 396 residues: MAKLIVSDLDVKDKKVLIRVDFNVPIKDGVIGDDNRIVAALPTIQYVIDHGGKAILLSHLGRVKTEEDKAKLTLKPVAERLSELLKKPVTFVPATRGKELEDAINKMNDGDVLVMENTRFEDLDGKKESGNDPELGKYWASLGDLFVNDAFGTAHRSHASNVGIASNMKQTAAGFLMEKEIKFLGDAVDNPKHPFIAILGGAKVSDKIGVIENLVPKADKILIGGGMTYTFYAAKGMSIGKSLVEKDKIELAKKIMDQAGDKLLLPVDSVVATEFSNDAPHKVVDGDIPDGYMALDIGPKTIKEFKDALQGAKTVVWNGPMGVFEMSNYAEGTLEVGRALGDLKDATTIIGGGDSTAAAKQLGIAPKITHISTGGGASLEYLEGKTLPGIAAISDK.

Residues 21 to 23 (DFN), arginine 36, 59 to 62 (HLGR), arginine 119, and arginine 156 contribute to the substrate site. ATP is bound by residues lysine 207, glutamate 325, and 352–355 (GGDS).

The protein belongs to the phosphoglycerate kinase family. In terms of assembly, monomer.

The protein localises to the cytoplasm. It catalyses the reaction (2R)-3-phosphoglycerate + ATP = (2R)-3-phospho-glyceroyl phosphate + ADP. It functions in the pathway carbohydrate degradation; glycolysis; pyruvate from D-glyceraldehyde 3-phosphate: step 2/5. The sequence is that of Phosphoglycerate kinase from Lacticaseibacillus casei (strain BL23) (Lactobacillus casei).